Consider the following 422-residue polypeptide: Tyrosine--tRNA ligase (422 aa).

Tyr37 is a binding site for L-tyrosine. The 'HIGH' region motif lies at 42–51; the sequence is PTEESLHIGH. Residues Tyr175 and Gln179 each contribute to the L-tyrosine site. The 'KMSKS' region signature appears at 235 to 239; the sequence is KFGKT. An ATP-binding site is contributed by Lys238. The S4 RNA-binding domain occupies 357–414; that stretch reads KDLQEALVLTSLAQSRTQAKNMIISNSISINTEKIRKNHIFHEKDKLFGKFTLLSRGK.

This sequence belongs to the class-I aminoacyl-tRNA synthetase family. TyrS type 1 subfamily. Homodimer.

The protein localises to the cytoplasm. The catalysed reaction is tRNA(Tyr) + L-tyrosine + ATP = L-tyrosyl-tRNA(Tyr) + AMP + diphosphate + H(+). Catalyzes the attachment of tyrosine to tRNA(Tyr) in a two-step reaction: tyrosine is first activated by ATP to form Tyr-AMP and then transferred to the acceptor end of tRNA(Tyr). The chain is Tyrosine--tRNA ligase from Buchnera aphidicola subsp. Acyrthosiphon pisum (strain 5A).